The sequence spans 219 residues: 7-cyano-7-deazaguanine synthase (219 aa).

10-20 (FSGGQDSTTCL) provides a ligand contact to ATP. Zn(2+) is bound by residues cysteine 188, cysteine 196, cysteine 199, and cysteine 202.

Belongs to the QueC family. Requires Zn(2+) as cofactor.

It catalyses the reaction 7-carboxy-7-deazaguanine + NH4(+) + ATP = 7-cyano-7-deazaguanine + ADP + phosphate + H2O + H(+). It functions in the pathway purine metabolism; 7-cyano-7-deazaguanine biosynthesis. Its function is as follows. Catalyzes the ATP-dependent conversion of 7-carboxy-7-deazaguanine (CDG) to 7-cyano-7-deazaguanine (preQ(0)). The chain is 7-cyano-7-deazaguanine synthase from Neisseria meningitidis serogroup B (strain ATCC BAA-335 / MC58).